The sequence spans 214 residues: Calcineurin B homologous protein 3 (214 aa).

The segment at Met1–Phe20 is disordered. A lipid anchor (N-myristoyl glycine) is attached at Gly2. Residues Ala7–Gly16 show a composition bias toward basic and acidic residues. In terms of domain architecture, EF-hand spans Ser110–Gly145. Ca(2+)-binding residues include Asp123, Asp125, Asp127, Arg129, and Glu134.

Belongs to the calcineurin regulatory subunit family. CHP subfamily. In terms of assembly, monomer. Homodimer; disulfide-linked. Interacts with SLC9A1/NHE1; the interaction enables an optimal Na(+)/H(+) exchange activity. In terms of tissue distribution, expressed in mature megakaryocytes and polymorphonuclear granulocytes (at protein level). Abundantly expressed in heart. Also expressed at a lower level in adult testis and salivary gland, and in the placenta.

Its subcellular location is the nucleus. The protein resides in the cytoplasm. The protein localises to the membrane. It localises to the cell membrane. It is found in the cell projection. Its subcellular location is the lamellipodium. The protein resides in the ruffle membrane. Functions as an integral cofactor in cell pH regulation by controlling plasma membrane-type Na(+)/H(+) exchange activity. Promotes the maturation, transport, cell surface stability and exchange activity of SLC9A1/NHE1 at the plasma membrane. Promotes the induction of hematopoietic stem cell differentiation toward megakaryocytic lineage. Essential for the coupling of ERK cascade activation with the expression of ETS family genes in megakaryocytic differentiation. Also involved in granulocytic differentiation in a ERK-dependent manner. Inhibits the phosphatase activity of calcineurin. This chain is Calcineurin B homologous protein 3 (TESC), found in Homo sapiens (Human).